Reading from the N-terminus, the 205-residue chain is Pyridoxal 5'-phosphate synthase subunit PdxT (205 aa).

Residue Gly54–Ser56 coordinates L-glutamine. The Nucleophile role is filled by Cys86. L-glutamine is bound by residues Arg118 and Ile147–Arg148. Catalysis depends on charge relay system residues His183 and Glu185.

The protein belongs to the glutaminase PdxT/SNO family. As to quaternary structure, in the presence of PdxS, forms a dodecamer of heterodimers. Only shows activity in the heterodimer.

It carries out the reaction aldehydo-D-ribose 5-phosphate + D-glyceraldehyde 3-phosphate + L-glutamine = pyridoxal 5'-phosphate + L-glutamate + phosphate + 3 H2O + H(+). The enzyme catalyses L-glutamine + H2O = L-glutamate + NH4(+). Its pathway is cofactor biosynthesis; pyridoxal 5'-phosphate biosynthesis. Functionally, catalyzes the hydrolysis of glutamine to glutamate and ammonia as part of the biosynthesis of pyridoxal 5'-phosphate. The resulting ammonia molecule is channeled to the active site of PdxS. The polypeptide is Pyridoxal 5'-phosphate synthase subunit PdxT (Nitrosopumilus maritimus (strain SCM1)).